A 612-amino-acid chain; its full sequence is DEAD-box ATP-dependent RNA helicase 11 (612 aa).

Disordered stretches follow at residues 1 to 70 and 83 to 104; these read MSAS…SGGG and GAGGGGGGGGGWNNRSGGWDRR. The residue at position 2 (S2) is an N-acetylserine. Gly residues-rich tracts occupy residues 61 to 70 and 83 to 94; these read SGGGGASGGG and GAGGGGGGGGGW. The Q motif motif lies at 151-179; sequence NTFADIDLGDALNLNIRRCKYVRPTPVQR. Residues 182–366 enclose the Helicase ATP-binding domain; the sequence is IPILLAERDL…ADFMSNYIFL (185 aa). 195–202 serves as a coordination point for ATP; it reads AQTGSGKT. A DEAD box motif is present at residues 310–313; the sequence is DEAD. One can recognise a Helicase C-terminal domain in the interval 377–542; sequence LITQRVEFVQ…EVPEWLTRYA (166 aa). The tract at residues 547 to 583 is disordered; sequence FGGGKKRSGGRFGGRDFRREGSYSRGGGGGGGGGGSD. Residues 559–568 show a composition bias toward basic and acidic residues; the sequence is GGRDFRREGS. Gly residues predominate over residues 570–583; that stretch reads SRGGGGGGGGGGSD.

This sequence belongs to the DEAD box helicase family. DDX3/DED1 subfamily.

It carries out the reaction ATP + H2O = ADP + phosphate + H(+). This Arabidopsis thaliana (Mouse-ear cress) protein is DEAD-box ATP-dependent RNA helicase 11 (RH11).